A 365-amino-acid polypeptide reads, in one-letter code: Galactoside alpha-(1,2)-fucosyltransferase 1 (365 aa).

Over 1–8 the chain is Cytoplasmic; that stretch reads MWLRSHRQ. A helical; Signal-anchor for type II membrane protein membrane pass occupies residues 9–25; that stretch reads LCLAFLLVCVLSVIFFL. Residues 26–365 lie on the Lumenal side of the membrane; sequence HIHQDSFPHG…LSPLWTLAKP (340 aa). 2 N-linked (GlcNAc...) asparagine glycosylation sites follow: N65 and N327.

Belongs to the glycosyltransferase 11 family.

The protein localises to the golgi apparatus. It is found in the golgi stack membrane. It catalyses the reaction a beta-D-galactosyl-(1-&gt;4)-N-acetyl-beta-D-glucosaminyl derivative + GDP-beta-L-fucose = an alpha-L-Fuc-(1-&gt;2)-beta-D-Gal-(1-&gt;4)-beta-D-GlcNAc derivative + GDP + H(+). It carries out the reaction a ganglioside GA1 + GDP-beta-L-fucose = a ganglioside Fuc-GA1 + GDP + H(+). The enzyme catalyses a beta-D-Gal-(1-&gt;3)-beta-D-GlcNAc-(1-&gt;3)-beta-D-Gal-(1-&gt;4)-beta-D-Glc-(1&lt;-&gt;1')-Cer(d18:1(4E)) + GDP-beta-L-fucose = alpha-L-fucosyl-(1-&gt;2)- beta-D-galactosyl-(1-&gt;3)-N-acetyl-beta-D-glucosaminyl-(1-&gt;3)-beta-D-galactosyl-(1-&gt;4)-beta-D-glucosyl-(1&lt;-&gt;1')-N-acylsphing-4-enine + GDP + H(+). The catalysed reaction is a neolactoside nLc4Cer(d18:1(4E)) + GDP-beta-L-fucose = a neolactoside IV(2)-alpha-Fuc-nLc4Cer(d18:1(4E)) + GDP + H(+). It catalyses the reaction a ganglioside GM1 + GDP-beta-L-fucose = a ganglioside Fuc-GM1 + GDP + H(+). It carries out the reaction beta-D-galactosyl-(1-&gt;3)-N-acetyl-D-galactosamine + GDP-beta-L-fucose = alpha-L-fucosyl-(1-&gt;2)-beta-D-galactosyl-(1-&gt;3)-N-acetyl-D-galactosamine + GDP + H(+). Its pathway is protein modification; protein glycosylation. Its function is as follows. Catalyzes the transfer of L-fucose, from a guanosine diphosphate-beta-L-fucose, to the terminal galactose residue of glycoconjugates through an alpha(1,2) linkage leading to H antigen synthesis that is an intermediate substrate in the synthesis of ABO blood group antigens. H antigen is essential for maturation of the glomerular layer of the main olfactory bulb, in cell migration and early cell-cell contacts during tumor associated angiogenesis. Preferentially fucosylates soluble lactose and to a lesser extent fucosylates glycolipids gangliosides GA1 and GM1a. The protein is Galactoside alpha-(1,2)-fucosyltransferase 1 of Homo sapiens (Human).